Reading from the N-terminus, the 243-residue chain is Orotidine 5'-phosphate decarboxylase (243 aa).

Substrate is bound by residues D19, K41, 69 to 78, T124, R185, Q194, G214, and R215; that span reads DLKFFDIPAT. The active-site Proton donor is the K71.

Belongs to the OMP decarboxylase family. Type 1 subfamily. In terms of assembly, homodimer.

The enzyme catalyses orotidine 5'-phosphate + H(+) = UMP + CO2. It participates in pyrimidine metabolism; UMP biosynthesis via de novo pathway; UMP from orotate: step 2/2. Functionally, catalyzes the decarboxylation of orotidine 5'-monophosphate (OMP) to uridine 5'-monophosphate (UMP). In Xanthomonas campestris pv. campestris (strain 8004), this protein is Orotidine 5'-phosphate decarboxylase.